The following is a 490-amino-acid chain: Betaine aldehyde dehydrogenase (490 aa).

K(+) contacts are provided by T26, I27, and D93. 150–152 (GAW) is a binding site for NAD(+). The active-site Charge relay system is the K162. 176 to 179 (KPSE) contacts NAD(+). V180 lines the K(+) pocket. Position 230-233 (230-233 (GVAS)) interacts with NAD(+). Residue L246 coordinates K(+). E252 functions as the Proton acceptor in the catalytic mechanism. The NAD(+) site is built by G254, C286, and E387. Residue C286 is the Nucleophile of the active site. At C286 the chain carries Cysteine sulfenic acid (-SOH). Residues K457 and G460 each coordinate K(+). E464 (charge relay system) is an active-site residue.

This sequence belongs to the aldehyde dehydrogenase family. In terms of assembly, dimer of dimers. The cofactor is K(+).

The catalysed reaction is betaine aldehyde + NAD(+) + H2O = glycine betaine + NADH + 2 H(+). It participates in amine and polyamine biosynthesis; betaine biosynthesis via choline pathway; betaine from betaine aldehyde: step 1/1. In terms of biological role, involved in the biosynthesis of the osmoprotectant glycine betaine. Catalyzes the irreversible oxidation of betaine aldehyde to the corresponding acid. The sequence is that of Betaine aldehyde dehydrogenase from Escherichia coli O45:K1 (strain S88 / ExPEC).